We begin with the raw amino-acid sequence, 149 residues long: Large ribosomal subunit protein uL13 (149 aa).

Belongs to the universal ribosomal protein uL13 family. As to quaternary structure, part of the 50S ribosomal subunit.

Its function is as follows. This protein is one of the early assembly proteins of the 50S ribosomal subunit, although it is not seen to bind rRNA by itself. It is important during the early stages of 50S assembly. The protein is Large ribosomal subunit protein uL13 of Chlorobium luteolum (strain DSM 273 / BCRC 81028 / 2530) (Pelodictyon luteolum).